The following is a 369-amino-acid chain: UDP-N-acetylglucosamine--N-acetylmuramyl-(pentapeptide) pyrophosphoryl-undecaprenol N-acetylglucosamine transferase (369 aa).

Residues 15 to 17 (TGG), N126, R169, S197, and Q299 contribute to the UDP-N-acetyl-alpha-D-glucosamine site.

This sequence belongs to the glycosyltransferase 28 family. MurG subfamily.

It is found in the cell inner membrane. It catalyses the reaction di-trans,octa-cis-undecaprenyl diphospho-N-acetyl-alpha-D-muramoyl-L-alanyl-D-glutamyl-meso-2,6-diaminopimeloyl-D-alanyl-D-alanine + UDP-N-acetyl-alpha-D-glucosamine = di-trans,octa-cis-undecaprenyl diphospho-[N-acetyl-alpha-D-glucosaminyl-(1-&gt;4)]-N-acetyl-alpha-D-muramoyl-L-alanyl-D-glutamyl-meso-2,6-diaminopimeloyl-D-alanyl-D-alanine + UDP + H(+). It participates in cell wall biogenesis; peptidoglycan biosynthesis. In terms of biological role, cell wall formation. Catalyzes the transfer of a GlcNAc subunit on undecaprenyl-pyrophosphoryl-MurNAc-pentapeptide (lipid intermediate I) to form undecaprenyl-pyrophosphoryl-MurNAc-(pentapeptide)GlcNAc (lipid intermediate II). This is UDP-N-acetylglucosamine--N-acetylmuramyl-(pentapeptide) pyrophosphoryl-undecaprenol N-acetylglucosamine transferase from Methylobacterium radiotolerans (strain ATCC 27329 / DSM 1819 / JCM 2831 / NBRC 15690 / NCIMB 10815 / 0-1).